A 95-amino-acid chain; its full sequence is Aspartyl/glutamyl-tRNA(Asn/Gln) amidotransferase subunit C (95 aa).

This sequence belongs to the GatC family. Heterotrimer of A, B and C subunits.

It carries out the reaction L-glutamyl-tRNA(Gln) + L-glutamine + ATP + H2O = L-glutaminyl-tRNA(Gln) + L-glutamate + ADP + phosphate + H(+). The catalysed reaction is L-aspartyl-tRNA(Asn) + L-glutamine + ATP + H2O = L-asparaginyl-tRNA(Asn) + L-glutamate + ADP + phosphate + 2 H(+). Its function is as follows. Allows the formation of correctly charged Asn-tRNA(Asn) or Gln-tRNA(Gln) through the transamidation of misacylated Asp-tRNA(Asn) or Glu-tRNA(Gln) in organisms which lack either or both of asparaginyl-tRNA or glutaminyl-tRNA synthetases. The reaction takes place in the presence of glutamine and ATP through an activated phospho-Asp-tRNA(Asn) or phospho-Glu-tRNA(Gln). The chain is Aspartyl/glutamyl-tRNA(Asn/Gln) amidotransferase subunit C from Chlorobium luteolum (strain DSM 273 / BCRC 81028 / 2530) (Pelodictyon luteolum).